A 204-amino-acid chain; its full sequence is Thymidylate kinase (204 aa).

10-17 (GGDGAGKT) is an ATP binding site.

This sequence belongs to the thymidylate kinase family.

It carries out the reaction dTMP + ATP = dTDP + ADP. Its function is as follows. Phosphorylation of dTMP to form dTDP in both de novo and salvage pathways of dTTP synthesis. This is Thymidylate kinase from Cutibacterium acnes (strain DSM 16379 / KPA171202) (Propionibacterium acnes).